The following is a 529-amino-acid chain: BAR/IMD domain-containing adapter protein 2-like 2 (529 aa).

The region spanning 1–239 (MAPEMDQFYR…HSPGLLGPVL (239 aa)) is the IMD domain. 2 disordered regions span residues 221–332 (EASR…GGAR) and 399–529 (NPLN…PLIR). A phosphoserine mark is found at serine 231, serine 272, and serine 304. Low complexity predominate over residues 301 to 317 (SASSLYSSSTQRSRSNS). The segment covering 321–331 (RPGGGGGGGGA) has biased composition (gly residues). The SH3 domain maps to 329–392 (GGARRVRALV…PEAYVKPLDE (64 aa)). Polar residues predominate over residues 439–459 (GNSTASSDYWDGQSRSRTPSH). The span at 473 to 484 (PSSRRSSMGSMG) shows a compositional bias: low complexity. Phosphoserine is present on residues serine 479 and serine 482.

The protein resides in the cell membrane. Its subcellular location is the cell junction. The protein localises to the cytoplasmic vesicle membrane. Phosphoinositides-binding protein that induces the formation of planar or gently curved membrane structures. Binds to phosphoinositides, including to phosphatidylinositol 4,5-bisphosphate (PtdIns(4,5)P2) headgroups. There seems to be no clear preference for a specific phosphoinositide. This Bos taurus (Bovine) protein is BAR/IMD domain-containing adapter protein 2-like 2 (BAIAP2L2).